Consider the following 530-residue polypeptide: Pre-mRNA-splicing factor PRP9 (530 aa).

The segment at 280–310 (IYCPFCSRWFKTSSVFESHLVGKIHKKNESK) adopts a Matrin-type 1 zinc-finger fold. Residues 367–388 (DSTEKEGAEQVDGEQRDGQLQE) form a disordered region. Over residues 368–388 (STEKEGAEQVDGEQRDGQLQE) the composition is skewed to basic and acidic residues. The Matrin-type 2 zinc finger occupies 421–452 (YRCEICSNKVYNGRRTFERHFNEERHIYHLRC). Residues 488 to 516 (AVPPKPNPSQLKVPTELELEEEDEEGNVM) are disordered. Over residues 504-513 (LELEEEDEEG) the composition is skewed to acidic residues.

Belongs to the SF3A3 family. As to quaternary structure, belongs to the CWC complex (or CEF1-associated complex), a spliceosome sub-complex reminiscent of a late-stage spliceosome composed of the U2, U5 and U6 snRNAs and at least BUD13, BUD31, BRR2, CDC40, CEF1, CLF1, CUS1, CWC2, CWC15, CWC21, CWC22, CWC23, CWC24, CWC25, CWC27, ECM2, HSH155, IST3, ISY1, LEA1, MSL1, NTC20, PRP8, PRP9, PRP11, PRP19, PRP21, PRP22, PRP45, PRP46, SLU7, SMB1, SMD1, SMD2, SMD3, SMX2, SMX3, SNT309, SNU114, SPP2, SYF1, SYF2, RSE1 and YJU2.

It is found in the nucleus. Functionally, mRNA splicing factors, PRP9, PRP11, and PRP21, are necessary for binding of the U2 snRNP to the pre-mRNA in an early step of spliceosome assembly. The polypeptide is Pre-mRNA-splicing factor PRP9 (PRP9) (Saccharomyces cerevisiae (strain ATCC 204508 / S288c) (Baker's yeast)).